The sequence spans 174 residues: MIDGDGFRPNVGIVICNRNGQVLWARRYGQHSWQFPQGGVDDGETPEQAMFRELYEEIGLKQDDVTILATSRNWLKYRLPKRLIRWESKPVCIGQKQKWFLLRLDAAKEACIQFGCHGQPEFDDWRWVSYWYPVRQVVSFKREVYRRVMKEFAAIAMPYLPPVAKKEPRRKGYR.

The Nudix hydrolase domain occupies 6–150 (GFRPNVGIVI…KREVYRRVMK (145 aa)). The short motif at 38 to 59 (GGVDDGETPEQAMFRELYEEIG) is the Nudix box element.

It belongs to the Nudix hydrolase family. RppH subfamily. Requires a divalent metal cation as cofactor.

Functionally, accelerates the degradation of transcripts by removing pyrophosphate from the 5'-end of triphosphorylated RNA, leading to a more labile monophosphorylated state that can stimulate subsequent ribonuclease cleavage. This is RNA pyrophosphohydrolase from Tolumonas auensis (strain DSM 9187 / NBRC 110442 / TA 4).